The primary structure comprises 285 residues: 2-dehydro-3-deoxyphosphooctonate aldolase (285 aa).

This sequence belongs to the KdsA family.

The protein resides in the cytoplasm. It carries out the reaction D-arabinose 5-phosphate + phosphoenolpyruvate + H2O = 3-deoxy-alpha-D-manno-2-octulosonate-8-phosphate + phosphate. It functions in the pathway carbohydrate biosynthesis; 3-deoxy-D-manno-octulosonate biosynthesis; 3-deoxy-D-manno-octulosonate from D-ribulose 5-phosphate: step 2/3. The protein operates within bacterial outer membrane biogenesis; lipopolysaccharide biosynthesis. The sequence is that of 2-dehydro-3-deoxyphosphooctonate aldolase from Acinetobacter baylyi (strain ATCC 33305 / BD413 / ADP1).